Here is a 134-residue protein sequence, read N- to C-terminus: NADH-quinone oxidoreductase subunit A 1 (134 aa).

3 consecutive transmembrane segments (helical) span residues 10–30 (LIPL…LLLA), 65–85 (FYLI…ILAW), and 94–114 (IPGL…LVWL).

The protein belongs to the complex I subunit 3 family. NDH-1 is composed of 14 different subunits. Subunits NuoA, H, J, K, L, M, N constitute the membrane sector of the complex.

Its subcellular location is the cell inner membrane. The catalysed reaction is a quinone + NADH + 5 H(+)(in) = a quinol + NAD(+) + 4 H(+)(out). NDH-1 shuttles electrons from NADH, via FMN and iron-sulfur (Fe-S) centers, to quinones in the respiratory chain. The immediate electron acceptor for the enzyme in this species is believed to be ubiquinone. Couples the redox reaction to proton translocation (for every two electrons transferred, four hydrogen ions are translocated across the cytoplasmic membrane), and thus conserves the redox energy in a proton gradient. The chain is NADH-quinone oxidoreductase subunit A 1 from Citrifermentans bemidjiense (strain ATCC BAA-1014 / DSM 16622 / JCM 12645 / Bem) (Geobacter bemidjiensis).